Reading from the N-terminus, the 133-residue chain is Small ribosomal subunit protein uS8 (133 aa).

This sequence belongs to the universal ribosomal protein uS8 family. In terms of assembly, part of the 30S ribosomal subunit. Contacts proteins S5 and S12.

Functionally, one of the primary rRNA binding proteins, it binds directly to 16S rRNA central domain where it helps coordinate assembly of the platform of the 30S subunit. The sequence is that of Small ribosomal subunit protein uS8 from Mycoplasmoides gallisepticum (strain R(low / passage 15 / clone 2)) (Mycoplasma gallisepticum).